The sequence spans 785 residues: Penicillin-binding protein 1A (785 aa).

Residues 1–6 lie on the Cytoplasmic side of the membrane; sequence MYKSLF. A helical; Signal-anchor for type II membrane protein transmembrane segment spans residues 7–27; it reads FFLKIFAILILLGCSVTAYII. The Periplasmic portion of the chain corresponds to 28 to 785; it reads YHYSHDLPDY…GISDQSQEIY (758 aa). The interval 49–220 is transglycosylase; that stretch reads TRIYSRDGKL…SELNPDKNYS (172 aa). Glu87 acts as the Proton donor; for transglycosylase activity in catalysis. The transpeptidase stretch occupies residues 398–711; it reads DVIVVEPIKD…SNVVLPIFID (314 aa). The active-site Acyl-ester intermediate; for transpeptidase activity is the Ser457.

The protein in the N-terminal section; belongs to the glycosyltransferase 51 family. This sequence in the C-terminal section; belongs to the transpeptidase family.

Its subcellular location is the cell inner membrane. It catalyses the reaction [GlcNAc-(1-&gt;4)-Mur2Ac(oyl-L-Ala-gamma-D-Glu-L-Lys-D-Ala-D-Ala)](n)-di-trans,octa-cis-undecaprenyl diphosphate + beta-D-GlcNAc-(1-&gt;4)-Mur2Ac(oyl-L-Ala-gamma-D-Glu-L-Lys-D-Ala-D-Ala)-di-trans,octa-cis-undecaprenyl diphosphate = [GlcNAc-(1-&gt;4)-Mur2Ac(oyl-L-Ala-gamma-D-Glu-L-Lys-D-Ala-D-Ala)](n+1)-di-trans,octa-cis-undecaprenyl diphosphate + di-trans,octa-cis-undecaprenyl diphosphate + H(+). The catalysed reaction is Preferential cleavage: (Ac)2-L-Lys-D-Ala-|-D-Ala. Also transpeptidation of peptidyl-alanyl moieties that are N-acyl substituents of D-alanine.. The protein operates within cell wall biogenesis; peptidoglycan biosynthesis. Its function is as follows. Cell wall formation. Synthesis of cross-linked peptidoglycan from the lipid intermediates. The enzyme has a penicillin-insensitive transglycosylase N-terminal domain (formation of linear glycan strands) and a penicillin-sensitive transpeptidase C-terminal domain (cross-linking of the peptide subunits). This Rickettsia typhi (strain ATCC VR-144 / Wilmington) protein is Penicillin-binding protein 1A (mrcA).